Here is a 465-residue protein sequence, read N- to C-terminus: MIPVRGLEGRKVAVLGLGRSGLATARALEAGGAEPLLWDDSPEARAKAEGQGFTVTDLTRERAFEGVALLVTSPGIPHLYPAPNPVIARAMAAGVPVDNDIGLFFRSFATRDWDAFDQMPRVVCVTGSNGKSTTTALIHHILSEAGRPTQMAGNIGRGVLDLDPARDGEVVVLELSSYQTDLARALTPDVAVFTNLSPDHLDRHGGMGGYFAAKRRLFAEGGPDRAVIGVDEPEGLYLAGQLSVAPEDDRVIRISAGQKLERFGWSVFARKGFLAEWRKGRQMASIDLRAMPGLPGAHNHQNACAAYAACRTMGLAPRQIEAALASFAGLPHRSQTVGEKGGVRFVNDSKATNVDSAAKALQAFPKIRWIAGGLGKDGGIVALQPHLGSVVKAYLIGHSARDFALQIGATDHEICETMERAVARAAEEAQPGEVVLLAPAAASFDQYPNFEKRGEDFMEKVKALL.

Position 127 to 133 (127 to 133 (GSNGKST)) interacts with ATP.

It belongs to the MurCDEF family.

It is found in the cytoplasm. The catalysed reaction is UDP-N-acetyl-alpha-D-muramoyl-L-alanine + D-glutamate + ATP = UDP-N-acetyl-alpha-D-muramoyl-L-alanyl-D-glutamate + ADP + phosphate + H(+). Its pathway is cell wall biogenesis; peptidoglycan biosynthesis. Cell wall formation. Catalyzes the addition of glutamate to the nucleotide precursor UDP-N-acetylmuramoyl-L-alanine (UMA). The sequence is that of UDP-N-acetylmuramoylalanine--D-glutamate ligase from Cereibacter sphaeroides (strain ATCC 17023 / DSM 158 / JCM 6121 / CCUG 31486 / LMG 2827 / NBRC 12203 / NCIMB 8253 / ATH 2.4.1.) (Rhodobacter sphaeroides).